The following is a 121-amino-acid chain: UPF0102 protein DehaBAV1_0707 (121 aa).

Belongs to the UPF0102 family.

This Dehalococcoides mccartyi (strain ATCC BAA-2100 / JCM 16839 / KCTC 5957 / BAV1) protein is UPF0102 protein DehaBAV1_0707.